The following is a 186-amino-acid chain: Chromosomal replication initiator protein DnaA (186 aa).

Glu-1 is a region of interest (domain I, interacts with DnaA modulators). Glu-1 is a region of interest (domain II). Positions 1–99 (EFFKTFNALI…GALNKVTHTS (99 aa)) are domain III, AAA+ region. The tract at residues 100–186 (LIGRSMTVES…GRNFGGRDHT (87 aa)) is domain IV, binds dsDNA.

Belongs to the DnaA family. Oligomerizes as a right-handed, spiral filament on DNA at oriC.

It is found in the cytoplasm. Functionally, plays an essential role in the initiation and regulation of chromosomal replication. ATP-DnaA binds to the origin of replication (oriC) to initiate formation of the DNA replication initiation complex once per cell cycle. Binds the DnaA box (a 9 base pair repeat at the origin) and separates the double-stranded (ds)DNA. Forms a right-handed helical filament on oriC DNA; dsDNA binds to the exterior of the filament while single-stranded (ss)DNA is stabiized in the filament's interior. The ATP-DnaA-oriC complex binds and stabilizes one strand of the AT-rich DNA unwinding element (DUE), permitting loading of DNA polymerase. After initiation quickly degrades to an ADP-DnaA complex that is not apt for DNA replication. Binds acidic phospholipids. This is Chromosomal replication initiator protein DnaA from Wolbachia sp.